The primary structure comprises 226 residues: Phospholipase Culp4 (226 aa).

The N-terminal stretch at 1 to 45 (MIPRPQPHSGRWRAGAARRLTSLVAAAFAAATLLLTPALAPPASA) is a signal peptide. A disulfide bridge links Cys47 with Cys117. The Nucleophile role is filled by Ser128. Cys191 and Cys198 are oxidised to a cystine. Residue Asp195 is part of the active site. Catalysis depends on His207, which acts as the Proton donor/acceptor.

Belongs to the cutinase family. Homodimer.

Its subcellular location is the cell membrane. The protein localises to the secreted. It is found in the cell wall. It carries out the reaction 1,2-dihexadecanoyl-sn-glycero-3-phosphocholine + H2O = 1-hexadecanoyl-sn-glycero-3-phosphocholine + hexadecanoate + H(+). The catalysed reaction is a butanoate ester + H2O = an aliphatic alcohol + butanoate + H(+). Its activity is regulated as follows. Inhibited by high concentrations of paraoxon. Inhibited by tetrahydrolipstatin (THL), a specific lipase inhibitor. Its function is as follows. A2-type phospholipase, which is probably involved in the degradation of macrophage membrane. Hydrolyzes dipalmitoylphosphatidylcholine. Also shows moderate esterase activity and hydrolyzes the p-nitrophenol-linked aliphatic ester pNP-butyrate (C4). Does not exhibit cutinase activity. The sequence is that of Phospholipase Culp4 from Mycobacterium tuberculosis (strain ATCC 25618 / H37Rv).